We begin with the raw amino-acid sequence, 174 residues long: MTDISKVIASLMREVPDFPEPGIQFKDLTPLLADAEGLMAVTDALAATAEGADLVAGIDARGFLLGAAVALRLGTGVLAVRKGGKLPPPVHSQTYNLEYGSATLEIPADGLDIAGRSVVIIDDVLATGGTVAATHRLLTSGGATVLHAAVVLELTALGGREVVQPLSVSSLYTV.

This sequence belongs to the purine/pyrimidine phosphoribosyltransferase family. As to quaternary structure, homodimer.

The protein resides in the cytoplasm. It catalyses the reaction AMP + diphosphate = 5-phospho-alpha-D-ribose 1-diphosphate + adenine. Its pathway is purine metabolism; AMP biosynthesis via salvage pathway; AMP from adenine: step 1/1. Its function is as follows. Catalyzes a salvage reaction resulting in the formation of AMP, that is energically less costly than de novo synthesis. In Mycobacterium sp. (strain JLS), this protein is Adenine phosphoribosyltransferase.